We begin with the raw amino-acid sequence, 260 residues long: Thiazole synthase (260 aa).

Lys96 (schiff-base intermediate with DXP) is an active-site residue. 1-deoxy-D-xylulose 5-phosphate contacts are provided by residues Gly157, Ala184 to Gly185, and Asn206 to Thr207.

The protein belongs to the ThiG family. As to quaternary structure, homotetramer. Forms heterodimers with either ThiH or ThiS.

It localises to the cytoplasm. The catalysed reaction is [ThiS sulfur-carrier protein]-C-terminal-Gly-aminoethanethioate + 2-iminoacetate + 1-deoxy-D-xylulose 5-phosphate = [ThiS sulfur-carrier protein]-C-terminal Gly-Gly + 2-[(2R,5Z)-2-carboxy-4-methylthiazol-5(2H)-ylidene]ethyl phosphate + 2 H2O + H(+). The protein operates within cofactor biosynthesis; thiamine diphosphate biosynthesis. In terms of biological role, catalyzes the rearrangement of 1-deoxy-D-xylulose 5-phosphate (DXP) to produce the thiazole phosphate moiety of thiamine. Sulfur is provided by the thiocarboxylate moiety of the carrier protein ThiS. In vitro, sulfur can be provided by H(2)S. This chain is Thiazole synthase, found in Rhodopseudomonas palustris (strain BisA53).